An 86-amino-acid chain; its full sequence is Acyl-CoA-binding protein homolog (86 aa).

One can recognise an ACB domain in the interval 2-86; sequence VSEQFNAAAE…FVEGLVAKYA (85 aa). Residues Lys-14, 29–33, Lys-51, Lys-55, and Tyr-74 contribute to the an acyl-CoA site; that span reads YALFK.

It belongs to the ACBP family. As to expression, expressed in larval and pupal brains. In adults, expressed in cardia, part of the Malpighian tubules, fat body, and gametes of both sexes.

Binds medium- and long-chain acyl-CoA esters with very high affinity and may function as an intracellular carrier of acyl-CoA esters. May be involved in energy metabolism in a manner that depends on the substrate used for energy production. Dbi and its metabolites are involved in the regulation of multiple biological processes. This chain is Acyl-CoA-binding protein homolog, found in Drosophila melanogaster (Fruit fly).